A 261-amino-acid chain; its full sequence is MVKVIVAGYKGRMGSTAAQMVIDNPDFELVGVYDARSEEQNLGEDDRFKGQNVPAFHDLDQIKTDATVWIDFTIPTAVYENAKFALNHGISPVIGTTGMTDEQVAELQKLAKDKQVGGLIAPNFGISAVLLMQFAQQAAKYFPDVEIIEMHHDDKIDSPSGTAISTAKKIAEVRQPKEQGNPDATETLPGARGAEYEGMRIHAVRLPGLVAHEEVMFGGPGEGLTIRQDSFDRISFMTGVKVAVEKVNQYHELFVGLEHLL.

8–13 (GYKGRM) contributes to the NAD(+) binding site. Arginine 36 lines the NADP(+) pocket. NAD(+) contacts are provided by residues 95–97 (GTT) and 121–124 (APNF). Histidine 151 (proton donor/acceptor) is an active-site residue. Histidine 152 is a (S)-2,3,4,5-tetrahydrodipicolinate binding site. Residue lysine 155 is the Proton donor of the active site. 161-162 (GT) provides a ligand contact to (S)-2,3,4,5-tetrahydrodipicolinate.

The protein belongs to the DapB family.

The protein resides in the cytoplasm. The enzyme catalyses (S)-2,3,4,5-tetrahydrodipicolinate + NAD(+) + H2O = (2S,4S)-4-hydroxy-2,3,4,5-tetrahydrodipicolinate + NADH + H(+). It catalyses the reaction (S)-2,3,4,5-tetrahydrodipicolinate + NADP(+) + H2O = (2S,4S)-4-hydroxy-2,3,4,5-tetrahydrodipicolinate + NADPH + H(+). It functions in the pathway amino-acid biosynthesis; L-lysine biosynthesis via DAP pathway; (S)-tetrahydrodipicolinate from L-aspartate: step 4/4. Catalyzes the conversion of 4-hydroxy-tetrahydrodipicolinate (HTPA) to tetrahydrodipicolinate. The protein is 4-hydroxy-tetrahydrodipicolinate reductase of Lactiplantibacillus plantarum (strain ATCC BAA-793 / NCIMB 8826 / WCFS1) (Lactobacillus plantarum).